Reading from the N-terminus, the 301-residue chain is uncharacterized protein (301 aa).

Catalysis depends on charge relay system residues serine 44 and tyrosine 107. The Proton donor role is filled by tyrosine 133. Lysine 162 (schiff-base intermediate with substrate) is an active-site residue.

This sequence belongs to the DapA family. In terms of assembly, homotetramer.

It is found in the cytoplasm. This is an uncharacterized protein from Pyrobaculum aerophilum (strain ATCC 51768 / DSM 7523 / JCM 9630 / CIP 104966 / NBRC 100827 / IM2).